Consider the following 86-residue polypeptide: RNA-binding protein Hfq (86 aa).

Residues 9-68 (DPYLNTLRKERVPVSIYLVNGIKLQGQIESFDQFVILLKNTVSQMVYKHAISTVVPSRPV) enclose the Sm domain. The tract at residues 66–86 (RPVRLPSAGDSEQADAEPGNA) is disordered.

The protein belongs to the Hfq family. In terms of assembly, homohexamer.

RNA chaperone that binds small regulatory RNA (sRNAs) and mRNAs to facilitate mRNA translational regulation in response to envelope stress, environmental stress and changes in metabolite concentrations. Also binds with high specificity to tRNAs. This is RNA-binding protein Hfq from Ectopseudomonas mendocina (strain ymp) (Pseudomonas mendocina).